The chain runs to 101 residues: Small ribosomal subunit protein uS14 (101 aa).

Belongs to the universal ribosomal protein uS14 family. In terms of assembly, part of the 30S ribosomal subunit. Contacts proteins S3 and S10.

In terms of biological role, binds 16S rRNA, required for the assembly of 30S particles and may also be responsible for determining the conformation of the 16S rRNA at the A site. The protein is Small ribosomal subunit protein uS14 of Tropheryma whipplei (strain TW08/27) (Whipple's bacillus).